Reading from the N-terminus, the 849-residue chain is Rho guanine nucleotide exchange factor 15 (849 aa).

Disordered regions lie at residues 1–146, 159–202, and 277–308; these read MSAQ…ASAP, GAEG…NGTP, and LPPL…LPSE. The segment covering 18 to 31 has biased composition (basic residues); that stretch reads RIIRPRPPSRHRAP. Residues 48–59 show a composition bias toward polar residues; it reads QISNDASASVCT. Residues 65-110 are compositionally biased toward low complexity; that stretch reads PPTASLKPPALLPPSVSRTSLDSQTSPDSPSSTPSPSPVSRRSISP. Phosphoserine is present on residues S107 and S109. Residues 111 to 123 show a composition bias toward pro residues; that stretch reads EPAPCSPVPPPKP. Residues 164 to 180 show a composition bias toward polar residues; it reads AQSSDSLERCSQGSTEV. Y361 is subject to Phosphotyrosine; by EPHB2. Residues 425–609 enclose the DH domain; sequence RMQESLFEVV…SKIIERCSAE (185 aa). Composition is skewed to polar residues over residues 771-786 and 840-849; these read CSEP…QSLE and SSGTPDTPQP. Disordered regions lie at residues 771–803 and 819–849; these read CSEP…GWLK and GEHE…TPQP.

In terms of assembly, interacts with EPHA4. Interacts with EPHB2. Phosphorylated on tyrosine residues upon EFNA1 stimulation. EPHB2-dependent phosphorylation at Tyr-361 triggers UBE3A-mediated ubiquitination. In terms of processing, ubiquitinated; UBE3A-mediated ubiquitination and degradation by the proteasome promotes EFNB1-dependent synapse formation. As to expression, at P12, expressed is detected in the CA1 region and the dentate gyrus of the hippocampus.

It localises to the cell projection. Its subcellular location is the dendrite. Functionally, specific GEF for RhoA activation. Does not activate RAC1 or CDC42. Regulates vascular smooth muscle contractility. Negatively regulates excitatory synapse development by suppressing the synapse-promoting activity of EPHB2. The polypeptide is Rho guanine nucleotide exchange factor 15 (Arhgef15) (Mus musculus (Mouse)).